Here is a 791-residue protein sequence, read N- to C-terminus: Protein SEY1 (791 aa).

Over 1–685 (MSEDGASKCQ…KRSTIKSHTH (685 aa)) the chain is Cytoplasmic. The 229-residue stretch at 40-268 (GLDYHVISVF…REDYYLSGKY (229 aa)) folds into the GB1/RHD3-type G domain. GTP is bound at residue 50-57 (GSQSSGKS). The helical transmembrane segment at 686–706 (IPMWIYAIIAVLGWNEFMLVL) threads the bilayer. The Lumenal segment spans residues 707–709 (RNP). Residues 710-730 (LFIALMLLIVGAAYTVHRLNL) form a helical membrane-spanning segment. Residues 731-791 (WTPLATFASA…NETKENANES (61 aa)) are Cytoplasmic-facing. A disordered region spans residues 763 to 791 (PKNASSKPVESFEMQDLSVNETKENANES).

It belongs to the TRAFAC class dynamin-like GTPase superfamily. GB1/RHD3 GTPase family. RHD3 subfamily.

Its subcellular location is the endoplasmic reticulum membrane. In terms of biological role, cooperates with the reticulon proteins and tubule-shaping DP1 family proteins to generate and maintain the structure of the tubular endoplasmic reticulum network. Has GTPase activity, which is required for its function in ER organization. This Eremothecium gossypii (strain ATCC 10895 / CBS 109.51 / FGSC 9923 / NRRL Y-1056) (Yeast) protein is Protein SEY1.